Reading from the N-terminus, the 622-residue chain is Low affinity potassium transport system protein Kup (622 aa).

A run of 12 helical transmembrane segments spans residues 9 to 29 (LPAV…TSPL), 49 to 69 (VFGF…LKYL), 101 to 121 (VLVI…VITP), 137 to 157 (PSMD…LFII), 165 to 185 (VGKL…VLGA), 212 to 232 (AVSF…EALY), 247 to 267 (WFTV…ALLL), 279 to 299 (LLAP…ATII), 337 to 357 (IYIP…IVSF), 363 to 383 (LAAA…ILFC), 397 to 417 (AWVL…ANVV), and 419 to 439 (ILSG…IMTT).

Belongs to the HAK/KUP transporter (TC 2.A.72) family.

The protein localises to the cell inner membrane. The catalysed reaction is K(+)(in) + H(+)(in) = K(+)(out) + H(+)(out). Responsible for the low-affinity transport of potassium into the cell. Likely operates as a K(+):H(+) symporter. The chain is Low affinity potassium transport system protein Kup from Pectobacterium carotovorum subsp. carotovorum (strain PC1).